A 299-amino-acid chain; its full sequence is Taste receptor type 2 member 1 (299 aa).

Over 1 to 9 the chain is Extracellular; it reads MLESHLIIY. Residues 10–30 traverse the membrane as a helical segment; it reads FLLAVIQFLLGIFTNGIIVVV. Over 31-55 the chain is Cytoplasmic; that stretch reads NGIDLIKHRKMAPLDLLLSCLAVSR. Residues 56 to 76 traverse the membrane as a helical segment; sequence IFLQLFIFYVNVIVIFFIEFI. Topologically, residues 77-81 are extracellular; that stretch reads MCSAN. A helical transmembrane segment spans residues 82–102; the sequence is CAILLFVNELELWLATWLGVF. At 103–124 the chain is on the cytoplasmic side; it reads YCAKVASVRHPLFIWLKMRISK. The helical transmembrane segment at 125 to 145 threads the bilayer; the sequence is LVPWMILGSLLYVSMICVFHS. The Extracellular portion of the chain corresponds to 146–178; that stretch reads KYAGFMVPHFLRNFFSQNATIQKEDTLAIQIFS. An N-linked (GlcNAc...) asparagine glycan is attached at asparagine 163. Residues 179–199 traverse the membrane as a helical segment; that stretch reads FVAEFSVPLLIFLVAVLLLIF. Over 200-222 the chain is Cytoplasmic; that stretch reads SLGRHTRQMRNTVAGSRVPGRGA. Residues 223–243 traverse the membrane as a helical segment; it reads PISALLSILSFLILYFSHCMI. The Extracellular segment spans residues 244 to 257; that stretch reads KVFLSSLKFHVRRF. The chain crosses the membrane as a helical span at residues 258 to 278; it reads IFLFFILVIGIYPSGHSLILI. Residues 279-299 are Cytoplasmic-facing; it reads LGNPKLKQNAKKFLLHSKCCQ.

It belongs to the G-protein coupled receptor T2R family.

It localises to the membrane. Functionally, receptor that may play a role in the perception of bitterness and is gustducin-linked. May play a role in sensing the chemical composition of the gastrointestinal content. The activity of this receptor may stimulate alpha gustducin, mediate PLC-beta-2 activation and lead to the gating of TRPM5. The polypeptide is Taste receptor type 2 member 1 (TAS2R1) (Pan paniscus (Pygmy chimpanzee)).